We begin with the raw amino-acid sequence, 268 residues long: Phosphatidylglycerol--prolipoprotein diacylglyceryl transferase (268 aa).

Helical transmembrane passes span 14–34 (LGPI…FAGW), 57–77 (LTFY…IIFY), 90–110 (FFLW…LIAF), and 117–137 (IGAN…IGLG). Arg-140 contacts a 1,2-diacyl-sn-glycero-3-phospho-(1'-sn-glycerol). Helical transmembrane passes span 174 to 194 (QLFE…LVTI), 200 to 220 (YLVL…CEFF), and 238 to 258 (GQIL…AVFI).

The protein belongs to the Lgt family.

It is found in the cell inner membrane. The enzyme catalyses L-cysteinyl-[prolipoprotein] + a 1,2-diacyl-sn-glycero-3-phospho-(1'-sn-glycerol) = an S-1,2-diacyl-sn-glyceryl-L-cysteinyl-[prolipoprotein] + sn-glycerol 1-phosphate + H(+). The protein operates within protein modification; lipoprotein biosynthesis (diacylglyceryl transfer). Functionally, catalyzes the transfer of the diacylglyceryl group from phosphatidylglycerol to the sulfhydryl group of the N-terminal cysteine of a prolipoprotein, the first step in the formation of mature lipoproteins. In Francisella tularensis subsp. novicida (strain U112), this protein is Phosphatidylglycerol--prolipoprotein diacylglyceryl transferase.